We begin with the raw amino-acid sequence, 849 residues long: Trehalose-phosphatase (849 aa).

A glycosyltransferase region spans residues methionine 1 to threonine 558.

In the N-terminal section; belongs to the glycosyltransferase 20 family. It in the C-terminal section; belongs to the trehalose phosphatase family. Requires Mg(2+) as cofactor.

The protein localises to the cytoplasm. It localises to the nucleus. The catalysed reaction is alpha,alpha-trehalose 6-phosphate + H2O = alpha,alpha-trehalose + phosphate. It functions in the pathway carbohydrate biosynthesis. In terms of biological role, phosphatase catalytic subunit of the trehalose synthase complex that catalyzes the production of trehalose from glucose-6-phosphate and UDP-glucose in a two step process. The chain is Trehalose-phosphatase (tps2) from Schizosaccharomyces pombe (strain 972 / ATCC 24843) (Fission yeast).